The following is a 220-amino-acid chain: Deoxyribose-phosphate aldolase 1 (220 aa).

Asp89 acts as the Proton donor/acceptor in catalysis. Residue Lys151 is the Schiff-base intermediate with acetaldehyde of the active site. Catalysis depends on Lys180, which acts as the Proton donor/acceptor.

Belongs to the DeoC/FbaB aldolase family. DeoC type 1 subfamily.

It localises to the cytoplasm. It carries out the reaction 2-deoxy-D-ribose 5-phosphate = D-glyceraldehyde 3-phosphate + acetaldehyde. It participates in carbohydrate degradation; 2-deoxy-D-ribose 1-phosphate degradation; D-glyceraldehyde 3-phosphate and acetaldehyde from 2-deoxy-alpha-D-ribose 1-phosphate: step 2/2. Catalyzes a reversible aldol reaction between acetaldehyde and D-glyceraldehyde 3-phosphate to generate 2-deoxy-D-ribose 5-phosphate. This is Deoxyribose-phosphate aldolase 1 from Mesoplasma florum (strain ATCC 33453 / NBRC 100688 / NCTC 11704 / L1) (Acholeplasma florum).